A 79-amino-acid chain; its full sequence is MORN repeat-containing protein 2 (79 aa).

MORN repeat units follow at residues 15 to 37 (YEGHFKDNMFHGLGTYTFPNGAK) and 38 to 60 (YTGNFNENRVEGEGQYTDIQGLE).

The protein is MORN repeat-containing protein 2 (MORN2) of Bos taurus (Bovine).